The sequence spans 496 residues: Probable histidine ammonia-lyase (496 aa).

The segment at residues 141 to 143 is a cross-link (5-imidazolinone (Ala-Gly)); it reads ASG. Ser142 is subject to 2,3-didehydroalanine (Ser).

This sequence belongs to the PAL/histidase family. In terms of processing, contains an active site 4-methylidene-imidazol-5-one (MIO), which is formed autocatalytically by cyclization and dehydration of residues Ala-Ser-Gly.

Its subcellular location is the cytoplasm. It carries out the reaction L-histidine = trans-urocanate + NH4(+). Its pathway is amino-acid degradation; L-histidine degradation into L-glutamate; N-formimidoyl-L-glutamate from L-histidine: step 1/3. This chain is Probable histidine ammonia-lyase, found in Thermoplasma acidophilum (strain ATCC 25905 / DSM 1728 / JCM 9062 / NBRC 15155 / AMRC-C165).